A 73-amino-acid chain; its full sequence is UPF0435 protein lwe1727 (73 aa).

It belongs to the UPF0435 family.

The protein is UPF0435 protein lwe1727 of Listeria welshimeri serovar 6b (strain ATCC 35897 / DSM 20650 / CCUG 15529 / CIP 8149 / NCTC 11857 / SLCC 5334 / V8).